The chain runs to 154 residues: Probable chemoreceptor glutamine deamidase CheD (154 aa).

Belongs to the CheD family.

It carries out the reaction L-glutaminyl-[protein] + H2O = L-glutamyl-[protein] + NH4(+). Functionally, probably deamidates glutamine residues to glutamate on methyl-accepting chemotaxis receptors (MCPs), playing an important role in chemotaxis. The sequence is that of Probable chemoreceptor glutamine deamidase CheD from Methanococcus maripaludis (strain C5 / ATCC BAA-1333).